We begin with the raw amino-acid sequence, 453 residues long: Ribosome biogenesis protein YTM1 (453 aa).

Positions 19 to 102 (VKVRFFTNEE…ETVIDLQYTR (84 aa)) are ubiquitin-like (UBL) domain. The interval 112 to 453 (SFTNEDWISS…KKIDIYREAN (342 aa)) is sufficient for interaction with ERB1 and association with 66S pre-ribosomes. WD repeat units lie at residues 128-166 (GHGAVLASNMKLQESKILSGSYDGVVRTYNMSGEVESQY), 168-206 (GHSGPVKSVRWISPTRIVSAGNDHSLRLWKTKLAGVEEG), 218-257 (GHKGPVVDLAVDYKSNKIISAGNDSVVGVWSTNASDMSAV), 292-332 (GHGQ…CVDT), 334-373 (STGFSLLSILQLPNLHLVASGSSARHINLHDPRASSSTEQ), 380-420 (GHTN…AMYT), and 422-453 (GKGGKVFGVSWDPIGIVSGGEDKKIDIYREAN).

Belongs to the WD repeat WDR12/YTM1 family. In terms of assembly, component of the NOP7 complex, composed of ERB1, NOP7 and YTM1. The complex is held together by ERB1, which interacts with NOP7 via its N-terminal domain and with YTM1 via a high-affinity interaction between the seven-bladed beta-propeller domains of the 2 proteins. The NOP7 complex associates with the 66S pre-ribosome. Interacts (via UBL domain) with MDN1 (via VWFA/MIDAS domain).

The protein localises to the nucleus. The protein resides in the nucleolus. It localises to the nucleoplasm. In terms of biological role, component of the NOP7 complex, which is required for maturation of the 25S and 5.8S ribosomal RNAs and formation of the 60S ribosome. This Meyerozyma guilliermondii (strain ATCC 6260 / CBS 566 / DSM 6381 / JCM 1539 / NBRC 10279 / NRRL Y-324) (Yeast) protein is Ribosome biogenesis protein YTM1.